Consider the following 92-residue polypeptide: Small ribosomal subunit protein bS20 (92 aa).

The segment covering 1–21 (MPLHKSAEKRLRQAARRNERN) has biased composition (basic and acidic residues). Disordered stretches follow at residues 1–26 (MPLH…ARKK) and 73–92 (ASRK…PTAS). Polar residues predominate over residues 82 to 92 (KALNNYTPTAS).

The protein belongs to the bacterial ribosomal protein bS20 family.

Binds directly to 16S ribosomal RNA. The sequence is that of Small ribosomal subunit protein bS20 from Chlorobaculum tepidum (strain ATCC 49652 / DSM 12025 / NBRC 103806 / TLS) (Chlorobium tepidum).